We begin with the raw amino-acid sequence, 435 residues long: Serine--tRNA ligase (435 aa).

237–239 (TAE) serves as a coordination point for L-serine. Residue 268 to 270 (RSE) participates in ATP binding. Glutamate 291 contacts L-serine. An ATP-binding site is contributed by 355 to 358 (EISS). Serine 390 contributes to the L-serine binding site.

The protein belongs to the class-II aminoacyl-tRNA synthetase family. Type-1 seryl-tRNA synthetase subfamily. Homodimer. The tRNA molecule binds across the dimer.

It is found in the cytoplasm. The enzyme catalyses tRNA(Ser) + L-serine + ATP = L-seryl-tRNA(Ser) + AMP + diphosphate + H(+). The catalysed reaction is tRNA(Sec) + L-serine + ATP = L-seryl-tRNA(Sec) + AMP + diphosphate + H(+). It participates in aminoacyl-tRNA biosynthesis; selenocysteinyl-tRNA(Sec) biosynthesis; L-seryl-tRNA(Sec) from L-serine and tRNA(Sec): step 1/1. Its function is as follows. Catalyzes the attachment of serine to tRNA(Ser). Is also able to aminoacylate tRNA(Sec) with serine, to form the misacylated tRNA L-seryl-tRNA(Sec), which will be further converted into selenocysteinyl-tRNA(Sec). This chain is Serine--tRNA ligase, found in Lactobacillus acidophilus (strain ATCC 700396 / NCK56 / N2 / NCFM).